The following is an 833-amino-acid chain: Major vault protein (833 aa).

7 MVP repeats span residues 54–118, 119–170, 171–223, 224–278, 280–328, 329–380, and 381–433; these read RHYC…QLIP, PNTG…TVIY, PNTA…TMLS, DLKA…VSLS, KEYV…LVVG, KEEA…MALD, and KNEG…SIQT.

The vault ribonucleoprotein particle is a huge (400 A x 670 A) cage structure of 12.9 MDa. It consists of a dimer of half-vaults, with each half-vault comprising 39 identical major vault protein (MVP) chains, PARP4 and one or more vault RNAs (vRNAs).

The protein resides in the cytoplasm. The protein localises to the nucleus. In terms of biological role, required for normal vault structure. Vaults are multi-subunit structures that may act as scaffolds for proteins involved in signal transduction. Vaults may also play a role in nucleo-cytoplasmic transport. This is Major vault protein from Leishmania infantum.